Consider the following 63-residue polypeptide: Keratin-associated protein 19-8 (63 aa).

The protein belongs to the KRTAP type 19 family. Interacts with hair keratins.

In the hair cortex, hair keratin intermediate filaments are embedded in an interfilamentous matrix, consisting of hair keratin-associated proteins (KRTAP), which are essential for the formation of a rigid and resistant hair shaft through their extensive disulfide bond cross-linking with abundant cysteine residues of hair keratins. The matrix proteins include the high-sulfur and high-glycine-tyrosine keratins. In Homo sapiens (Human), this protein is Keratin-associated protein 19-8 (KRTAP19-8).